Here is a 1544-residue protein sequence, read N- to C-terminus: Rho guanine nucleotide exchange factor 12 (1544 aa).

The tract at residues 1 to 62 is disordered; it reads MSGTQSTITD…KTKSSSEESR (62 aa). N-acetylserine is present on Ser-2. Basic and acidic residues predominate over residues 28–45; sequence SPTDKKQKVERIASHDFD. Ser-41 carries the phosphoserine modification. Residues 72–151 enclose the PDZ domain; that stretch reads CVIIQKDDNG…LTVQGRPPGS (80 aa). Residues 194 to 262 are a coiled coil; sequence MGEENNVVHN…LSKATGSAQD (69 aa). Residues 247-346 form a disordered region; the sequence is PQLQEQLSKA…SLVGSPSTRI (100 aa). Composition is skewed to polar residues over residues 249-260 and 293-309; these read LQEQLSKATGSA and DCSS…NADS. Ser-309 is subject to Phosphoserine. A compositionally biased stretch (basic and acidic residues) spans 313–329; the sequence is GPKERIYLEENPEKSET. Residues 330–344 show a composition bias toward polar residues; that stretch reads IQDTDTQSLVGSPST. The residue at position 341 (Ser-341) is a Phosphoserine. One can recognise an RGSL domain in the interval 367–558; that stretch reads GQCSCFQSIE…LMYMKHLGVK (192 aa). Residues 570–706 are disordered; it reads GRIGFLPKIK…GDTLDGTPRT (137 aa). A compositionally biased stretch (basic and acidic residues) spans 582–592; sequence MKKDKEGEEKG. The segment covering 631 to 640 has biased composition (polar residues); sequence STPSSVSPEP. Ser-637 is subject to Phosphoserine. A compositionally biased stretch (low complexity) spans 663–676; that stretch reads ANSMSSVASGASFS. Thr-736 bears the Phosphothreonine mark. Residues 787–977 enclose the DH domain; it reads KRQEVINELF…RQILNYVNQA (191 aa). The 114-residue stretch at 1019–1132 folds into the PH domain; the sequence is KMIHEGPLVW…WQDLICRMAA (114 aa). Polar residues predominate over residues 1138-1149; sequence STKPIPLPQSTP. A disordered region spans residues 1138–1179; the sequence is STKPIPLPQSTPGEGDNDEEDPSKLKEEQHGISVTGLQSPDR. Ser-1288, Ser-1327, Ser-1377, Ser-1457, and Ser-1541 each carry phosphoserine.

As to quaternary structure, interacts with GNA12 and GNA13, probably through the RGS-like domain. Interacts with RHOA, PLXNB1 and PLXNB2. Interacts through its PDZ domain with IGF1R beta subunit. Interacts with GCSAM. Found in a complex with ARHGEF11 and ARHGEF12; binding to ARHGEF11 and ARHGEF12 enhances CDC42 GEF activity of PLEKHG4B, and PLEKHG4B, in turn, inhibits ARHGEF11- and ARHGEF12-mediated RHOA activation. As to expression, ubiquitously expressed. Isoform 2 is found in jejunum and testis.

It is found in the cytoplasm. The protein resides in the membrane. Its function is as follows. May play a role in the regulation of RhoA GTPase by guanine nucleotide-binding alpha-12 (GNA12) and alpha-13 (GNA13). Acts as guanine nucleotide exchange factor (GEF) for RhoA GTPase and may act as GTPase-activating protein (GAP) for GNA12 and GNA13. In Homo sapiens (Human), this protein is Rho guanine nucleotide exchange factor 12 (ARHGEF12).